The following is a 218-amino-acid chain: Large ribosomal subunit protein bL25 (218 aa).

A disordered region spans residues 178 to 218; it reads VTPPTVTEDPDATEEDNTTAESVEATGERNDDNLDRPGRVE. Positions 185 to 195 are enriched in acidic residues; it reads EDPDATEEDNT. Residues 203–218 are compositionally biased toward basic and acidic residues; that stretch reads TGERNDDNLDRPGRVE.

The protein belongs to the bacterial ribosomal protein bL25 family. CTC subfamily. In terms of assembly, part of the 50S ribosomal subunit; part of the 5S rRNA/L5/L18/L25 subcomplex. Contacts the 5S rRNA. Binds to the 5S rRNA independently of L5 and L18.

In terms of biological role, this is one of the proteins that binds to the 5S RNA in the ribosome where it forms part of the central protuberance. In Shouchella clausii (strain KSM-K16) (Alkalihalobacillus clausii), this protein is Large ribosomal subunit protein bL25.